The sequence spans 205 residues: uncharacterized protein (205 aa).

Positions 1–19 (MKTLCVLSIFLALLGGLCT) are cleaved as a signal peptide. The segment covering 40 to 133 (VSSVASTSTP…PKTSKNNPKT (94 aa)) has biased composition (low complexity). Residues 40 to 135 (VSSVASTSTP…TSKNNPKTQE (96 aa)) form a disordered region. A helical transmembrane segment spans residues 147 to 167 (GILYLFILLLIIFVIILICFI).

It is found in the host membrane. This is an uncharacterized protein from Equine herpesvirus 2 (strain 86/87) (EHV-2).